The chain runs to 1054 residues: DIS3-like exonuclease 1 (1054 aa).

One can recognise a CSD1 domain in the interval 236-309 (AGIKSGRYIQ…PKNEWKGRTV (74 aa)). The 67-residue stretch at 365-431 (ILVTPWDYRI…GEIATILVEN (67 aa)) folds into the CSD2 domain. The 352-residue stretch at 465 to 816 (RKDLRKSHLV…VHRLLMAAIS (352 aa)) folds into the RNB domain. Residue Ser-989 is modified to Phosphoserine.

The protein belongs to the RNR ribonuclease family. Component of the RNA exosome complex. The catalytically inactive RNA exosome core (Exo-9) complex is believed to associate with catalytic subunits EXOSC10, and DIS3 or DIS3L in cytoplasmic- and nuclear-specific RNA exosome complex forms. Mg(2+) serves as cofactor.

It localises to the cytoplasm. The enzyme catalyses Exonucleolytic cleavage in the 3'- to 5'-direction to yield nucleoside 5'-phosphates.. In terms of biological role, catalytic component of the RNA exosome complex which has 3'-&gt;5' exoribonuclease activity and participates in a multitude of cellular RNA processing and degradation events. In the cytoplasm, the RNA exosome complex is involved in general mRNA turnover and specifically degrades inherently unstable mRNAs containing AU-rich elements (AREs) within their 3' untranslated regions, and in RNA surveillance pathways, preventing translation of aberrant mRNAs. It seems to be involved in degradation of histone mRNA. The sequence is that of DIS3-like exonuclease 1 (DIS3L) from Homo sapiens (Human).